The chain runs to 396 residues: Acetate kinase (396 aa).

Asparagine 7 lines the Mg(2+) pocket. Residue lysine 14 participates in ATP binding. Residue arginine 88 participates in substrate binding. The active-site Proton donor/acceptor is aspartate 145. Residues 205-209, 279-281, and 327-331 contribute to the ATP site; these read HLGNG, DFR, and GIGEN. Glutamate 381 contacts Mg(2+).

Belongs to the acetokinase family. Homodimer. It depends on Mg(2+) as a cofactor. Requires Mn(2+) as cofactor.

It localises to the cytoplasm. The catalysed reaction is acetate + ATP = acetyl phosphate + ADP. It functions in the pathway metabolic intermediate biosynthesis; acetyl-CoA biosynthesis; acetyl-CoA from acetate: step 1/2. In terms of biological role, catalyzes the formation of acetyl phosphate from acetate and ATP. Can also catalyze the reverse reaction. This Campylobacter jejuni subsp. jejuni serotype O:2 (strain ATCC 700819 / NCTC 11168) protein is Acetate kinase.